Consider the following 71-residue polypeptide: Large ribosomal subunit protein uL29 (71 aa).

Belongs to the universal ribosomal protein uL29 family.

The sequence is that of Large ribosomal subunit protein uL29 from Rickettsia typhi (strain ATCC VR-144 / Wilmington).